A 76-amino-acid polypeptide reads, in one-letter code: Acyl carrier protein (76 aa).

The Carrier domain maps to 1–74 (MEERIKEIIA…DVINYIKEKK (74 aa)). Ser34 bears the O-(pantetheine 4'-phosphoryl)serine mark.

This sequence belongs to the acyl carrier protein (ACP) family. Post-translationally, 4'-phosphopantetheine is transferred from CoA to a specific serine of apo-ACP by AcpS. This modification is essential for activity because fatty acids are bound in thioester linkage to the sulfhydryl of the prosthetic group.

It localises to the cytoplasm. It participates in lipid metabolism; fatty acid biosynthesis. In terms of biological role, carrier of the growing fatty acid chain in fatty acid biosynthesis. In Persephonella marina (strain DSM 14350 / EX-H1), this protein is Acyl carrier protein.